The sequence spans 453 residues: Ribosomal protein uS12 methylthiotransferase RimO (453 aa).

The MTTase N-terminal domain maps to 9–124 (PKIGFVSLGC…VMDAVHKHMP (116 aa)). Cys18, Cys54, Cys83, Cys155, Cys159, and Cys162 together coordinate [4Fe-4S] cluster. The region spanning 141–382 (LTPKHFAYLK…MLLQEEISKK (242 aa)) is the Radical SAM core domain. A TRAM domain is found at 385 to 453 (QAKVGKTMRV…ADAHDLWAEA (69 aa)).

This sequence belongs to the methylthiotransferase family. RimO subfamily. The cofactor is [4Fe-4S] cluster.

It localises to the cytoplasm. It carries out the reaction L-aspartate(89)-[ribosomal protein uS12]-hydrogen + (sulfur carrier)-SH + AH2 + 2 S-adenosyl-L-methionine = 3-methylsulfanyl-L-aspartate(89)-[ribosomal protein uS12]-hydrogen + (sulfur carrier)-H + 5'-deoxyadenosine + L-methionine + A + S-adenosyl-L-homocysteine + 2 H(+). Functionally, catalyzes the methylthiolation of an aspartic acid residue of ribosomal protein uS12. This Janthinobacterium sp. (strain Marseille) (Minibacterium massiliensis) protein is Ribosomal protein uS12 methylthiotransferase RimO.